Here is a 440-residue protein sequence, read N- to C-terminus: Transposon Ty1-NL1 Gag polyprotein (440 aa).

4 stretches are compositionally biased toward polar residues: residues 1 to 23 (MESQ…SVTS), 48 to 60 (TKAN…TPAS), 71 to 86 (SPQT…GPYQ), and 131 to 152 (PQYP…GNTF). Disordered regions lie at residues 1 to 86 (MESQ…GPYQ), 131 to 171 (PQYP…YVRP), and 350 to 425 (QQES…TEPI). Low complexity predominate over residues 153–165 (TDSSSADSDMTST). An RNA-binding region spans residues 299 to 401 (NNGIPINNKV…NSQSRTARAH (103 aa)). Over residues 363–372 (NPSDEKKDSR) the composition is skewed to basic and acidic residues. The segment covering 373–412 (TYTNTTKPKSITRNSQKPNNSQSRTARAHNVSTSNNSSGP) has biased composition (polar residues).

In terms of assembly, homotrimer.

It is found in the cytoplasm. Capsid protein (CA) is the structural component of the virus-like particle (VLP), forming the shell that encapsulates the retrotransposons dimeric RNA genome. The particles are assembled from trimer-clustered units and there are holes in the capsid shells that allow for the diffusion of macromolecules. CA also has nucleocapsid-like chaperone activity, promoting primer tRNA(i)-Met annealing to the multipartite primer-binding site (PBS), dimerization of Ty1 RNA and initiation of reverse transcription. The chain is Transposon Ty1-NL1 Gag polyprotein (TY1A-NL1) from Saccharomyces cerevisiae (strain ATCC 204508 / S288c) (Baker's yeast).